A 341-amino-acid polypeptide reads, in one-letter code: Dehydration-responsive element-binding protein 2C (341 aa).

A Nuclear localization signal motif is present at residues 8-48; sequence RKRKSRGTRDVAEILRQWREYNEQIEAESCIDGGGPKSIRK. The disordered stretch occupies residues 36-63; sequence SCIDGGGPKSIRKPPPKGSRKGCMKGKG. Positions 45–59 are enriched in basic residues; it reads SIRKPPPKGSRKGCM. The segment at residues 71–128 is a DNA-binding region (AP2/ERF); sequence DYRGVRQRRWGKWVAEIREPDGGARLWLGTFSSSYEAALAYDEAAKAIYGQSARLNLP.

This sequence belongs to the AP2/ERF transcription factor family. ERF subfamily.

Its subcellular location is the nucleus. Functionally, transcriptional activator that binds specifically to the DNA sequence 5'-[AG]CCGAC-3'. Binding to the C-repeat/DRE element mediates high salinity- and abscisic acid-inducible transcription. This Arabidopsis thaliana (Mouse-ear cress) protein is Dehydration-responsive element-binding protein 2C (DREB2C).